The following is a 363-amino-acid chain: Nicotinamide adenine dinucleotide transporter 2, mitochondrial (363 aa).

3 Solcar repeats span residues 15–107 (REVA…LKDV), 115–203 (LSIG…IKQY), and 215–305 (LSPG…MLRF). 6 helical membrane passes run 21–41 (AGAGATAGAIAATFVCPLDVI), 82–102 (GLSPTIIALLPNWAVYFSVYG), 121–141 (MIAAAGAGAATSIATNPLWVV), 176–196 (LYSGILPSLAGVSHVAIQFPA), 215–235 (LSPGNVAIASSIAKVIASILT), and 277–299 (LYRGCATNLLRTTPSAVITFTTY). Residues 313 to 363 (ETNRSDDRRREEERKNLVSRRGEEEDKDLGLRESQTQSNKISTPHIPLGSK) are disordered. Positions 315–343 (NRSDDRRREEERKNLVSRRGEEEDKDLGL) are enriched in basic and acidic residues. Over residues 345-354 (ESQTQSNKIS) the composition is skewed to polar residues.

Belongs to the mitochondrial carrier (TC 2.A.29) family. Highly expressed in young meristematic shoot area, vascular bundles of leaves, developing siliques including the funiculi, petal veins, developing pollen and central cylinder of roots.

Its subcellular location is the mitochondrion membrane. Inhibited by pyridoxal 5'-phosphate, bathophenanthroline, tannic acid, mersalyl, mercuric chloride, p-hydroxymercuribenzoate, p-hydroxymercuribenzoate sulfonate, bromocresol purple and N-ethylmaleimide. Mediates the NAD(+) import into chloroplast. Favors the NAD(+)(in)/ADP or AMP(out) antiport exchange, but is also able to catalyze a low unidirectional transport (uniport) of NAD(+). Transports NAD(+), nicotinic acid adenine dinucleotide, nicotinamide mononucleotide, nicotinic acid mononucleotide, FAD, FMN, TTP, TDP, TMP, UTP, UDP, UMP, CTP, CDP, CMP, GTP, GDP, GMP, 3'-AMP, ATP, ADP and AMP, has low transport activity with cAMP, NADH and alpha-NAD(+), and has no activity with NADP(+), NADPH, nicotinamide, nicotinic acid, adenosine, thiamine mono- or diphosphate, inorganic phosphate, CoA, folate, NaCl, malate, malonate, citrate, fumarate, aspartate, glutamate, S-adenosylmethionine, lysine, arginine, and ornithine. The sequence is that of Nicotinamide adenine dinucleotide transporter 2, mitochondrial (NDT2) from Arabidopsis thaliana (Mouse-ear cress).